The chain runs to 456 residues: Zinc finger protein 25 (456 aa).

The KRAB domain occupies Val-8–Pro-79. C2H2-type zinc fingers lie at residues Cys-118–His-140, Tyr-146–His-168, Tyr-174–His-196, Tyr-202–His-224, Phe-230–His-252, Tyr-258–His-280, Tyr-286–His-308, Tyr-314–His-336, Phe-342–His-364, Tyr-370–His-392, Tyr-398–His-420, and Tyr-426–His-448.

Belongs to the krueppel C2H2-type zinc-finger protein family.

It localises to the nucleus. Its function is as follows. May be involved in transcriptional regulation. The sequence is that of Zinc finger protein 25 (ZNF25) from Homo sapiens (Human).